Reading from the N-terminus, the 93-residue chain is Co-chaperonin GroES (93 aa).

The protein belongs to the GroES chaperonin family. As to quaternary structure, heptamer of 7 subunits arranged in a ring. Interacts with the chaperonin GroEL.

The protein resides in the cytoplasm. In terms of biological role, together with the chaperonin GroEL, plays an essential role in assisting protein folding. The GroEL-GroES system forms a nano-cage that allows encapsulation of the non-native substrate proteins and provides a physical environment optimized to promote and accelerate protein folding. GroES binds to the apical surface of the GroEL ring, thereby capping the opening of the GroEL channel. In Geobacillus kaustophilus (strain HTA426), this protein is Co-chaperonin GroES.